We begin with the raw amino-acid sequence, 159 residues long: Transcriptional repressor NrdR (159 aa).

Residues 1-11 are compositionally biased toward polar residues; it reads MQCPTCQNTDS. The tract at residues 1–21 is disordered; that stretch reads MQCPTCQNTDSRVLESRSADS. A zinc finger spans residues 3–34; the sequence is CPTCQNTDSRVLESRSADSGKSVRRRRECLNC. Positions 49 to 139 constitute an ATP-cone domain; that stretch reads VSVMKKDGSR…VYRKFNGVKD (91 aa).

The protein belongs to the NrdR family. It depends on Zn(2+) as a cofactor.

Its function is as follows. Negatively regulates transcription of bacterial ribonucleotide reductase nrd genes and operons by binding to NrdR-boxes. The sequence is that of Transcriptional repressor NrdR from Prochlorococcus marinus (strain MIT 9215).